Here is a 184-residue protein sequence, read N- to C-terminus: UPF0398 protein OB1025 (184 aa).

Belongs to the UPF0398 family.

This chain is UPF0398 protein OB1025, found in Oceanobacillus iheyensis (strain DSM 14371 / CIP 107618 / JCM 11309 / KCTC 3954 / HTE831).